A 506-amino-acid polypeptide reads, in one-letter code: TOM1-like protein 3 (506 aa).

One can recognise a VHS domain in the interval 12–141 (ATNDMLIGPD…ELRSAGIEFP (130 aa)). In terms of domain architecture, GAT spans 180–268 (DASALSMEEI…VLQHHDDKAK (89 aa)). Disordered regions lie at residues 266 to 328 (KAKG…PPSS), 351 to 384 (ETFENVKPPSTSQSSNHDYSAPIFDEPVPQSKSP), and 398 to 477 (EQLP…PEDI). A compositionally biased stretch (acidic residues) spans 288–298 (DDDDDESDDDF). Residue Ser-294 is modified to Phosphoserine. Residues 358-368 (PPSTSQSSNHD) show a composition bias toward polar residues. At Ser-383 the chain carries Phosphoserine. Polar residues predominate over residues 450–460 (QSRNLSLNPTA). Residues 468 to 477 (PKKDDKPEDI) are compositionally biased toward basic and acidic residues.

Belongs to the TOM1 family. As to expression, preferentially expressed in cauline leaves.

The protein resides in the membrane. In terms of biological role, might contribute to the loading of the ESCRT machinery. In Arabidopsis thaliana (Mouse-ear cress), this protein is TOM1-like protein 3.